Here is a 61-residue protein sequence, read N- to C-terminus: Large ribosomal subunit protein bL32 (61 aa).

The protein belongs to the bacterial ribosomal protein bL32 family.

This is Large ribosomal subunit protein bL32 from Ehrlichia chaffeensis (strain ATCC CRL-10679 / Arkansas).